Consider the following 1836-residue polypeptide: InaD-like protein (1836 aa).

An L27 domain is found at 1–65 (MPENPAAEKM…SIKQLKGQLS (65 aa)). 3 PDZ domains span residues 134 to 221 (YIDI…AREV), 248 to 328 (DVEL…ARDP), and 365 to 453 (NVEL…VRRK). A phosphoserine mark is found at Ser455, Ser459, and Ser482. The segment covering 456 to 466 (LSASPFEQPSS) has biased composition (polar residues). The segment at 456-492 (LSASPFEQPSSREAVAEPPEVPELTGSLKPETNSRME) is disordered. Residues 555 to 641 (DEELQKYSKL…PFTLVCCRRL (87 aa)) enclose the PDZ 4 domain. The residue at position 647 (Ser647) is a Phosphoserine. 2 consecutive PDZ domains span residues 687-773 (TVEL…ICKP) and 1074-1166 (PRIV…VVQS). The segment covering 1173 to 1191 (VIPSVNNKGKTPPQNQDQN) has biased composition (polar residues). Residues 1173 to 1232 (VIPSVNNKGKTPPQNQDQNTQEKKAKRHGTAPPPMKLPPPYRAPSADTEESEEDSALTDK) form a disordered region. Positions 1203-1214 (APPPMKLPPPYR) are enriched in pro residues. Ser1217 bears the Phosphoserine mark. Positions 1219–1228 (DTEESEEDSA) are enriched in acidic residues. A PDZ 7 domain is found at 1245–1328 (LHIIELEKDK…PTRVKLVFIR (84 aa)). Residues 1341–1448 (FPVPSHSPSP…ADVTGSGNFQ (108 aa)) are disordered. Residues 1372-1383 (PLPERESSKPED) show a composition bias toward basic and acidic residues. Composition is skewed to polar residues over residues 1415–1426 (YSAQVSSSSQEI) and 1434–1448 (CQST…GNFQ). PDZ domains lie at 1472–1555 (EMII…VIYR) and 1568–1650 (VFLV…EIGR). The residue at position 1545 (Thr1545) is a Phosphothreonine. The disordered stretch occupies residues 1657-1678 (ASSRKTSQNSQGDQHSAHSSCR). The PDZ 10 domain occupies 1709-1795 (PRTVEIIREL…FGRIILQVVA (87 aa)). Positions 1813–1836 (SQLGSPTADRHPQDPEELLQRTAD) are disordered.

Forms a ternary complex with PALS1 and CRB1. Component of a complex whose core is composed of ARHGAP17, AMOT, PALS1, INADL/PATJ and PARD3/PAR3. Forms a heterotrimeric complex composed of MMP5, LIN7B and PATJ; the N-terminal L27 domain of PALS1 interacts with the L27 domain of PATJ and the C-terminal L27 domain of PALS1 interacts with the L27 domain of LIN7B. Component of a complex composed of CRB3, PALS1 and PATJ. As part of the Crumbs complex; interacts with WWP1, the interaction is enhanced by AMOTL2 and facilitates WWP1 localization to the plasma membrane. The Crumbs complex promotes monoubiquitination of AMOTL2 by WWP1, which activates the Hippo signaling pathway. Interacts (via N-terminus) with PALS1/PALS (via PDZ domain). Interacts with TJP3/ZO-3 and CLDN1/claudin-1. Interacts with ASIC3, KCNJ10, KCNJ15, GRIN2A, GRIN2B, GRIN2C, GRIN2D, NLGN2, and HTR2A. Interacts with MPP7. Directly interacts with HTR4. Interacts (via PDZ domain 8) with WWC1 (via the ADDV motif). Interacts with SLC6A4. Interacts (via C-terminus) with ARHGEF18. Interacts with NPHP1. Interacts with PARD3/PAR3. Interacts (via PDZ1-6 domains) with TJP1/ZO1; the interaction is required for attachment and extension of TJP1/ZO1 condensates along the apical cell interface. Abundantly expressed in germ cells, also expressed in testes and seminiferous tubules, with faint expression in Sertoli cells (at protein level).

The protein resides in the cell junction. Its subcellular location is the tight junction. It is found in the apical cell membrane. The protein localises to the cytoplasm. It localises to the perinuclear region. Scaffolding protein that facilitates the localization of proteins to the cell membrane. Required for the correct formation of tight junctions and epithelial apico-basal polarity. Acts (via its L27 domain) as an apical connector and elongation factor for multistranded TJP1/ZO1 condensates that form a tight junction belt, thereby required for the formation of the tight junction-mediated cell barrier. Positively regulates epithelial cell microtubule elongation and cell migration, possibly via facilitating localization of PRKCI/aPKC and PAR3D/PAR3 at the leading edge of migrating cells. Plays a role in the correct reorientation of the microtubule-organizing center during epithelial migration. May regulate the surface expression and/or function of ASIC3 in sensory neurons. May recruit ARHGEF18 to apical cell-cell boundaries. This chain is InaD-like protein, found in Rattus norvegicus (Rat).